The sequence spans 116 residues: Iron-sulfur cluster insertion protein ErpA (116 aa).

Iron-sulfur cluster is bound by residues Cys-44, Cys-108, and Cys-110.

Belongs to the HesB/IscA family. As to quaternary structure, homodimer. Iron-sulfur cluster serves as cofactor.

Required for insertion of 4Fe-4S clusters for at least IspG. The polypeptide is Iron-sulfur cluster insertion protein ErpA (Shewanella oneidensis (strain ATCC 700550 / JCM 31522 / CIP 106686 / LMG 19005 / NCIMB 14063 / MR-1)).